The primary structure comprises 1317 residues: uncharacterized protein (1317 aa).

Belongs to the oxoprolinase family.

This is an uncharacterized protein from Schizosaccharomyces pombe (strain 972 / ATCC 24843) (Fission yeast).